Reading from the N-terminus, the 906-residue chain is Eukaryotic translation initiation factor 3 subunit C (906 aa).

The segment at 1-22 (MSRFFANGSDSESESSEEEVQA) is disordered. Residues 11–20 (SESESSEEEV) are compositionally biased toward acidic residues. Phosphoserine occurs at positions 34, 165, 176, and 185. Residues 158–283 (REAPDQESEA…KRPEDDEDGE (126 aa)) are disordered. Positions 162–186 (DQESEAEDEEAAQDSDGGDAGDDSD) are enriched in acidic residues. The segment covering 195–209 (EAAPKVAKTVPAKAA) has biased composition (low complexity). Residues 211 to 237 (ADDDDSDDSIDWDSDSETETESSDDEN) are compositionally biased toward acidic residues. Residues 242 to 270 (MRERFLKRTTEKEEKDDDKRKDKRKEQKI) show a composition bias toward basic and acidic residues. The PCI domain occupies 641-817 (FHMHINLELL…ETVVMHRSEP (177 aa)). Disordered regions lie at residues 853 to 873 (GNMG…NWGG) and 887 to 906 (QRGR…IDEE). Over residues 894–906 (QQQQQQVQTIDEE) the composition is skewed to low complexity.

It belongs to the eIF-3 subunit C family. As to quaternary structure, component of the eukaryotic translation initiation factor 3 (eIF-3) complex. The eIF-3 complex interacts with pix.

Its subcellular location is the cytoplasm. Functionally, component of the eukaryotic translation initiation factor 3 (eIF-3) complex, which is involved in protein synthesis of a specialized repertoire of mRNAs and, together with other initiation factors, stimulates binding of mRNA and methionyl-tRNAi to the 40S ribosome. The eIF-3 complex specifically targets and initiates translation of a subset of mRNAs involved in cell proliferation. This chain is Eukaryotic translation initiation factor 3 subunit C, found in Drosophila ananassae (Fruit fly).